Reading from the N-terminus, the 146-residue chain is Large ribosomal subunit protein uL15 (146 aa).

The segment covering 1–18 (MKLHELKPAEGSRKERNR) has biased composition (basic and acidic residues). Residues 1–54 (MKLHELKPAEGSRKERNRVGRGVATGNGKTSGRGHKGQKARSGGGVRPGFEGGQ) are disordered. Residues 42–52 (SGGGVRPGFEG) are compositionally biased toward gly residues.

Belongs to the universal ribosomal protein uL15 family. As to quaternary structure, part of the 50S ribosomal subunit.

In terms of biological role, binds to the 23S rRNA. The polypeptide is Large ribosomal subunit protein uL15 (Staphylococcus aureus (strain Mu3 / ATCC 700698)).